The following is a 51-amino-acid chain: Large ribosomal subunit protein eL40 (51 aa).

This sequence belongs to the eukaryotic ribosomal protein eL40 family.

The protein is Large ribosomal subunit protein eL40 of Thermococcus gammatolerans (strain DSM 15229 / JCM 11827 / EJ3).